The sequence spans 140 residues: Nucleoside diphosphate kinase (140 aa).

The ATP site is built by Lys11, Phe59, Arg87, Thr93, Arg104, and Asn114. His117 functions as the Pros-phosphohistidine intermediate in the catalytic mechanism.

It belongs to the NDK family. In terms of assembly, homotetramer. The cofactor is Mg(2+).

The protein resides in the cytoplasm. It catalyses the reaction a 2'-deoxyribonucleoside 5'-diphosphate + ATP = a 2'-deoxyribonucleoside 5'-triphosphate + ADP. The enzyme catalyses a ribonucleoside 5'-diphosphate + ATP = a ribonucleoside 5'-triphosphate + ADP. In terms of biological role, major role in the synthesis of nucleoside triphosphates other than ATP. The ATP gamma phosphate is transferred to the NDP beta phosphate via a ping-pong mechanism, using a phosphorylated active-site intermediate. This is Nucleoside diphosphate kinase from Hyphomonas neptunium (strain ATCC 15444).